The primary structure comprises 196 residues: Imidazoleglycerol-phosphate dehydratase (196 aa).

It belongs to the imidazoleglycerol-phosphate dehydratase family.

The protein resides in the cytoplasm. The catalysed reaction is D-erythro-1-(imidazol-4-yl)glycerol 3-phosphate = 3-(imidazol-4-yl)-2-oxopropyl phosphate + H2O. Its pathway is amino-acid biosynthesis; L-histidine biosynthesis; L-histidine from 5-phospho-alpha-D-ribose 1-diphosphate: step 6/9. In Nitratidesulfovibrio vulgaris (strain DSM 19637 / Miyazaki F) (Desulfovibrio vulgaris), this protein is Imidazoleglycerol-phosphate dehydratase.